The primary structure comprises 222 residues: Ribonuclease T (222 aa).

An Exonuclease domain is found at 20-194 (VVIDVETAGF…YDTERTAELF (175 aa)). Mg(2+)-binding residues include D23, E25, H181, and D186. H181 functions as the Proton donor/acceptor in the catalytic mechanism.

It belongs to the RNase T family. Homodimer. The cofactor is Mg(2+).

Functionally, trims short 3' overhangs of a variety of RNA species, leaving a one or two nucleotide 3' overhang. Responsible for the end-turnover of tRNA: specifically removes the terminal AMP residue from uncharged tRNA (tRNA-C-C-A). Also appears to be involved in tRNA biosynthesis. This is Ribonuclease T from Shewanella oneidensis (strain ATCC 700550 / JCM 31522 / CIP 106686 / LMG 19005 / NCIMB 14063 / MR-1).